Here is a 215-residue protein sequence, read N- to C-terminus: Putative O-methyltransferase MAB_1361c (215 aa).

Residues valine 42, glutamate 64, glycine 66–threonine 67, serine 72, aspartate 90, and valine 91 contribute to the S-adenosyl-L-methionine site. Aspartate 138 serves as a coordination point for substrate.

It belongs to the class I-like SAM-binding methyltransferase superfamily. Cation-dependent O-methyltransferase family.

This chain is Putative O-methyltransferase MAB_1361c, found in Mycobacteroides abscessus (strain ATCC 19977 / DSM 44196 / CCUG 20993 / CIP 104536 / JCM 13569 / NCTC 13031 / TMC 1543 / L948) (Mycobacterium abscessus).